The following is a 677-amino-acid chain: DNA ligase (677 aa).

NAD(+) is bound by residues 43 to 47 (DHVYD), 92 to 93 (SM), and glutamate 122. The active-site N6-AMP-lysine intermediate is the lysine 124. 4 residues coordinate NAD(+): arginine 145, glutamate 179, lysine 295, and lysine 319. 4 residues coordinate Zn(2+): cysteine 413, cysteine 416, cysteine 431, and cysteine 436. Residues 599-677 (TSDSYFNGKT…EADLDNYLAQ (79 aa)) enclose the BRCT domain.

Belongs to the NAD-dependent DNA ligase family. LigA subfamily. The cofactor is Mg(2+). Requires Mn(2+) as cofactor.

It catalyses the reaction NAD(+) + (deoxyribonucleotide)n-3'-hydroxyl + 5'-phospho-(deoxyribonucleotide)m = (deoxyribonucleotide)n+m + AMP + beta-nicotinamide D-nucleotide.. In terms of biological role, DNA ligase that catalyzes the formation of phosphodiester linkages between 5'-phosphoryl and 3'-hydroxyl groups in double-stranded DNA using NAD as a coenzyme and as the energy source for the reaction. It is essential for DNA replication and repair of damaged DNA. In Latilactobacillus sakei subsp. sakei (strain 23K) (Lactobacillus sakei subsp. sakei), this protein is DNA ligase.